Consider the following 816-residue polypeptide: Sucrose synthase 1 (816 aa).

Positions 280 to 757 (MVFNVVIMSP…GLQRIEEKYT (478 aa)) are GT-B glycosyltransferase.

The protein belongs to the glycosyltransferase 1 family. Plant sucrose synthase subfamily. Homotetramer or heterotetramer with SUS2. In terms of tissue distribution, expressed in root phloem and leaf mesophyll. Expressed in phloem tissues and aleurone layers of seeds and at lower levels in the pericarp and endosperm cells (at protein level). Predominantly expressed in elongating tissues including roots, developing leaves and internodes.

The catalysed reaction is an NDP-alpha-D-glucose + D-fructose = a ribonucleoside 5'-diphosphate + sucrose + H(+). Its function is as follows. Sucrose-cleaving enzyme that provides UDP-glucose and fructose for various metabolic pathways. This is Sucrose synthase 1 (SUS1) from Oryza sativa subsp. japonica (Rice).